Reading from the N-terminus, the 210-residue chain is MTKGILGKKLGMTQVFAVDGKCIPVTVVEAGPCVVLQKKTEEKDGYNALQLGFGAKKTQSVNKPAMGHFKKSGKGAFEFLREVECENIDDHAVGDEITCDGFFATGDVIDVTGTSKGKGFQGVIKRWNFAGGRASHGSMFHRRPGGIGASAWPSRVFKGKKMAGQMGNKRVTTQGLEVVDVRPEKSLVLIKGAVPGPVNGLLLIRKSRKV.

The protein belongs to the universal ribosomal protein uL3 family. As to quaternary structure, part of the 50S ribosomal subunit. Forms a cluster with proteins L14 and L19.

One of the primary rRNA binding proteins, it binds directly near the 3'-end of the 23S rRNA, where it nucleates assembly of the 50S subunit. In Syntrophotalea carbinolica (strain DSM 2380 / NBRC 103641 / GraBd1) (Pelobacter carbinolicus), this protein is Large ribosomal subunit protein uL3.